We begin with the raw amino-acid sequence, 319 residues long: MATH domain and coiled-coil domain-containing protein At3g58200 (319 aa).

An MATH domain is found at 6 to 132 (DNKFRWVIKN…NEEVKIVVEV (127 aa)). The stretch at 255–302 (FKVDWLEKKLEEVKEKKKEEQIGETRMQEMKVFKQKCSDIEALMEREK) forms a coiled coil.

This is MATH domain and coiled-coil domain-containing protein At3g58200 from Arabidopsis thaliana (Mouse-ear cress).